A 306-amino-acid polypeptide reads, in one-letter code: Beta-lactamase (306 aa).

The first 36 residues, 1–36 (MKLKTKASIKFGICVGLLCLSITGFTPFFNSTHAEA), serve as a signal peptide directing secretion. The active-site Acyl-ester intermediate is the S89. 251 to 253 (KSG) is a binding site for substrate.

The protein belongs to the class-A beta-lactamase family.

Its subcellular location is the secreted. The catalysed reaction is a beta-lactam + H2O = a substituted beta-amino acid. Its function is as follows. This protein is a beta-lactamase with a substrate specificity for penicillins. The polypeptide is Beta-lactamase (penP) (Bacillus subtilis (strain 168)).